Consider the following 234-residue polypeptide: Endo-1,4-beta-xylanase 1 (234 aa).

Positions 1–21 (MVSFIFTRIILFAAAINGAVA) are cleaved as a signal peptide. 2 N-linked (GlcNAc...) asparagine glycosylation sites follow: Asn25 and Asn75. The region spanning 38–234 (SGTPSSTGYS…SSGFSSITVA (197 aa)) is the GH11 domain. Residue Glu124 is the Nucleophile of the active site. A glycan (N-linked (GlcNAc...) asparagine) is linked at Asn167. Glu221 functions as the Proton donor in the catalytic mechanism.

The protein belongs to the glycosyl hydrolase 11 (cellulase G) family.

It localises to the secreted. The catalysed reaction is Endohydrolysis of (1-&gt;4)-beta-D-xylosidic linkages in xylans.. It functions in the pathway glycan degradation; xylan degradation. Endo-1,4-beta-xylanase involved in the hydrolysis of xylan, a major structural heterogeneous polysaccharide found in plant biomass representing the second most abundant polysaccharide in the biosphere, after cellulose. In Leucoagaricus gongylophorus (Leaf-cutting ant fungus), this protein is Endo-1,4-beta-xylanase 1 (Xyn1).